An 839-amino-acid chain; its full sequence is MDFVVDYQTYAMADTAAPELPEPEPRLNLTSDAQSQPTGILDLQFKLPDLQRYSNNNATLPVDNDGAGSKDLHKKMTHYAMSSIDKIQLSNPSKQLGQNSQDEKLSQQESQNFTNYEPKNLDLSKLVSPSSGSNKNTTNLVLSNKLSKILNNYTLINYQATVQLRKSLKVLEENKERLSLDEQKLMNPEYVGTLARRALRTDLESQLLKEHITVLEEFKPIIRRIKRLSSSVEKIQRTSEKLLSNETNEVPTNNVVLQEIDQYRLKAEQLKLKKKILLSIRDRFTLNQVEDDVITNGTIDNIFFEVVKKVINIKDESSFLLTLPNLNAGNALIMGVNEILEKTNKKIFNYLIDFLYSFESSSNLLNDHGTTEQESLNIFRKSLVFLSSDLELFNELLKRVTTLRSKSILDEFLSQFDMNSTTSKPIILSAHDPIRYIGDVLASVHSIIANEADFVKSLFDFQDEDLKDTPISILQQNKTFLKGIDNKLLNDIIQSLSNSCRIRIEQIVRFEENPIINFEIVRLLKLYRVMFERKGIQDDSSIINNLKSLEDISKNRIIGYYEDYMKQTVMAETKNSSDDLLPPEWLSEYMNKLVELFEIYEKTHAAEDEESEDNKLLSSKNLQTIVEQPIKDVLLKQLQTSFPLAKKNEKEKASLLTIEINCFDLIKSRLQPFEGLFAQDDDSRKITIWVCDKLKEYTKQMLTLQIKFLFENTGLDLYSNLVNMIFPVDSVKDELDYDMYLALRDNSLMELDMVRKNVHDKLNYYLPQALTDVQGNLLFKLTSPMIADEICDECFKKLSLFYNIFRKLLIHLYPNKKDQVFEILNFSTDEFDMLIGIDH.

The protein belongs to the COG6 family.

It localises to the golgi apparatus membrane. Its function is as follows. Acts as a component of the peripheral membrane COG complex that is involved in intra-Golgi protein trafficking. COG is located at the cis-Golgi, and regulates tethering of retrograde intra-Golgi vesicles and possibly a number of other membrane trafficking events. The sequence is that of Conserved oligomeric Golgi complex subunit 6 (COG6) from Saccharomyces cerevisiae (strain YJM789) (Baker's yeast).